The following is a 372-amino-acid chain: MSNQHTLLISNLLPVGSNISTWWNFGSMLLTCLMMQIMTGFFLAIHYTANINLAFSSVIHIMRDVPYGWIMQNIHAIGASVFFICIYIHIARGLYYGLYMNKNVWFSGTALLITLMATAFFGYVLPWGQMSFWAATVITNLLTAIPYLGATVTTWFWGGFSVNDPTLTGFFALHFILPFTIASLSSIHIILLHNEGSSNPLGTNSDIDKIPFHPYHSYKDMLMTTSMFMLMFMILSFMPDLFNDPENFSKANPLITPQHIKPEWYFLFAYGILRSIPNKLGGTLALLMSVTILITAPFTHTSLVRSMTFRPLAQTLFWTLIATFITITWTATKPVEPPFILISQMASVFYFSFFIMNPLLGWTENKIMMMNS.

A run of 4 helical transmembrane segments spans residues 25–45, 69–90, 105–125, and 170–190; these read FGSM…FLAI, WIMQ…YIHI, WFSG…GYVL, and FFAL…IHII. Heme b contacts are provided by H75 and H89. Heme b-binding residues include H174 and H188. An a ubiquinone-binding site is contributed by H193. The next 4 helical transmembrane spans lie at 218 to 238, 280 to 300, 312 to 332, and 339 to 358; these read YKDM…LSFM, LGGT…PFTH, LAQT…WTAT, and FILI…IMNP.

It belongs to the cytochrome b family. As to quaternary structure, the cytochrome bc1 complex contains 3 respiratory subunits (MT-CYB, CYC1 and UQCRFS1), 2 core proteins (UQCRC1 and UQCRC2) and probably 6 low-molecular weight proteins. Heme b serves as cofactor.

It is found in the mitochondrion inner membrane. In terms of biological role, component of the ubiquinol-cytochrome c reductase complex (complex III or cytochrome b-c1 complex) that is part of the mitochondrial respiratory chain. The b-c1 complex mediates electron transfer from ubiquinol to cytochrome c. Contributes to the generation of a proton gradient across the mitochondrial membrane that is then used for ATP synthesis. The protein is Cytochrome b (MT-CYB) of Sinomicrurus japonicus (Coral snake).